The following is a 571-amino-acid chain: Proline-rich protein 35 (571 aa).

4 disordered regions span residues 1-27 (MSRE…PHYI), 79-187 (GSTT…EGSV), 286-402 (APVS…GSPE), and 476-571 (GPQA…GAEV). The segment covering 16–26 (ARSRKPKKPHY) has biased composition (basic residues). Over residues 165–175 (GMGGDPRGVGA) the composition is skewed to gly residues. The segment covering 316–336 (TPRDPGQEGELERAAQSDPRR) has biased composition (basic and acidic residues). Residues 351–367 (PSLTRFCSRSSLPTGSS) are compositionally biased toward polar residues. Pro residues predominate over residues 380–399 (PETPGPEGPLPLQPRGPVPG).

The polypeptide is Proline-rich protein 35 (PRR35) (Homo sapiens (Human)).